The chain runs to 245 residues: MRVGVLGAKGKVGATMVAGVQAAEDLTFTTGIDAGDPLSALVDTDTEVVIDFTHPDVVMDNLKFLIENGIHAVVGTTGFTDERLDQVRKWLEAKPDVSVLIAPNFAIGAVLSMHFAQQAAKHFESVEVIELHHPHKADAPSGTAARTARLIAEARKGMPPNPDATSTGLEGARGADVDGVPVHSIRLAGLVAHQEVLFGTLGETLTIRHDSIDRTSFVPGVLLAVRKIRENPGLTIGIESLLDLA.

NAD(+) contacts are provided by residues 7 to 12 (GAKGKV), 75 to 77 (GTT), and 102 to 105 (APNF). His132 serves as the catalytic Proton donor/acceptor. His133 is a (S)-2,3,4,5-tetrahydrodipicolinate binding site. The Proton donor role is filled by Lys136. 142–143 (GT) is a binding site for (S)-2,3,4,5-tetrahydrodipicolinate.

It belongs to the DapB family.

Its subcellular location is the cytoplasm. It carries out the reaction (S)-2,3,4,5-tetrahydrodipicolinate + NAD(+) + H2O = (2S,4S)-4-hydroxy-2,3,4,5-tetrahydrodipicolinate + NADH + H(+). The enzyme catalyses (S)-2,3,4,5-tetrahydrodipicolinate + NADP(+) + H2O = (2S,4S)-4-hydroxy-2,3,4,5-tetrahydrodipicolinate + NADPH + H(+). The protein operates within amino-acid biosynthesis; L-lysine biosynthesis via DAP pathway; (S)-tetrahydrodipicolinate from L-aspartate: step 4/4. Its function is as follows. Catalyzes the conversion of 4-hydroxy-tetrahydrodipicolinate (HTPA) to tetrahydrodipicolinate. This Mycolicibacterium gilvum (strain PYR-GCK) (Mycobacterium gilvum (strain PYR-GCK)) protein is 4-hydroxy-tetrahydrodipicolinate reductase.